We begin with the raw amino-acid sequence, 937 residues long: DNA mismatch repair protein msh-2 (937 aa).

659-666 contacts ATP; that stretch reads GPNMGGKS.

This sequence belongs to the DNA mismatch repair MutS family. Heterodimer of msh2 and msh6.

Its subcellular location is the nucleus. Its function is as follows. Involved in post-replicative DNA-mismatch repair. Binds to mismatch-containing DNA. In Neurospora crassa (strain ATCC 24698 / 74-OR23-1A / CBS 708.71 / DSM 1257 / FGSC 987), this protein is DNA mismatch repair protein msh-2 (msh-2).